Reading from the N-terminus, the 448-residue chain is DNA repair protein RadA (448 aa).

Residues 10-27 (CSNCGNTSPKWSGQCFDC) form a C4-type zinc finger. 91-98 (GDPGIGKS) contributes to the ATP binding site. Residues 250–254 (KNRFG) carry the RadA KNRFG motif motif. The segment at 349–448 (EVYLSIAGGL…KDLKLLLGSS (100 aa)) is lon-protease-like.

It belongs to the RecA family. RadA subfamily.

Its function is as follows. DNA-dependent ATPase involved in processing of recombination intermediates, plays a role in repairing DNA breaks. Stimulates the branch migration of RecA-mediated strand transfer reactions, allowing the 3' invading strand to extend heteroduplex DNA faster. Binds ssDNA in the presence of ADP but not other nucleotides, has ATPase activity that is stimulated by ssDNA and various branched DNA structures, but inhibited by SSB. Does not have RecA's homology-searching function. This Rickettsia bellii (strain RML369-C) protein is DNA repair protein RadA.